The following is a 146-amino-acid chain: Calmodulin-like protein 5 (146 aa).

Position 2 is an N-acetylalanine (Ala-2). EF-hand domains follow at residues 8–43 (EEEAQYKKAFSAVDTDGNGTINAQELGAALKATGKN), 44–74 (LSEAQLRKLISEVDSDGDGEISFQEFLTAAK), 78–113 (AGLEDLQVAFRAFDQDGDGHITVDELRRAMAGLGQP), and 114–146 (LPQEELDAMIREADVDQDGRVNYEEFARMLAQE). Ca(2+) is bound by residues Asp-21, Asp-23, Asn-25, Thr-27, Glu-32, Asp-57, Asp-59, Asp-61, Glu-63, Glu-68, Asp-91, Asp-93, Asp-95, His-97, Glu-102, Asp-127, Asp-129, Asp-131, Arg-133, and Glu-138.

Associates with transglutaminase 3. In terms of tissue distribution, particularly abundant in the epidermis where its expression is directly related to keratinocyte differentiation. Very low expression in lung.

Functionally, binds calcium. May be involved in terminal differentiation of keratinocytes. The sequence is that of Calmodulin-like protein 5 (CALML5) from Homo sapiens (Human).